The primary structure comprises 263 residues: Acyl-[acyl-carrier-protein]--UDP-N-acetylglucosamine O-acyltransferase (263 aa).

It belongs to the transferase hexapeptide repeat family. LpxA subfamily. As to quaternary structure, homotrimer.

It is found in the cytoplasm. The catalysed reaction is a (3R)-hydroxyacyl-[ACP] + UDP-N-acetyl-alpha-D-glucosamine = a UDP-3-O-[(3R)-3-hydroxyacyl]-N-acetyl-alpha-D-glucosamine + holo-[ACP]. Its pathway is glycolipid biosynthesis; lipid IV(A) biosynthesis; lipid IV(A) from (3R)-3-hydroxytetradecanoyl-[acyl-carrier-protein] and UDP-N-acetyl-alpha-D-glucosamine: step 1/6. Its function is as follows. Involved in the biosynthesis of lipid A, a phosphorylated glycolipid that anchors the lipopolysaccharide to the outer membrane of the cell. The chain is Acyl-[acyl-carrier-protein]--UDP-N-acetylglucosamine O-acyltransferase from Caulobacter vibrioides (strain ATCC 19089 / CIP 103742 / CB 15) (Caulobacter crescentus).